The sequence spans 1005 residues: Retinoblastoma-related protein (1005 aa).

Positions 404–605 are domain A; it reads TPVSTAMTTA…EKGSSMYNSL (202 aa). The pocket stretch occupies residues 404 to 853; that stretch reads TPVSTAMTTA…NEIFIPSVKP (450 aa). The spacer stretch occupies residues 606–722; the sequence is TIARPNLSNE…HPTRGETCAE (117 aa). Residues 723–853 are domain B; sequence TAVNLFFSKI…NEIFIPSVKP (131 aa). Residues 863–873 are compositionally biased toward polar residues; it reads VPKNPNNQVSE. Residues 863–899 form a disordered region; that stretch reads VPKNPNNQVSETNKKDESGPCPCPGSPKVSSFPSLPD.

The protein belongs to the retinoblastoma protein (RB) family.

It localises to the nucleus. Regulator of biological processes that recruits a histone deacetylase to control gene transcription. May play a role in the entry into mitosis, negatively regulating the cell proliferation. Formation of stable complexes with geminiviridae replication-associated proteins may create a cellular environment which favors viral DNA replication. The sequence is that of Retinoblastoma-related protein (RBR) from Pilosella piloselloides (Glaucous king-devil hawkweed).